The sequence spans 299 residues: Peroxisomal biogenesis factor 19 (299 aa).

An N-acetylalanine modification is found at Ala2. The docking to the peroxisome membrane and binding to PEX3 stretch occupies residues Ala2–Gly56. A necessary for PEX19 function on peroxisome biogenesis region spans residues Ala2 to Met91. Positions Ala25–Leu63 are disordered. Ser35, Ser39, Ser54, and Ser66 each carry phosphoserine. The residue at position 236 (Thr236) is a Phosphothreonine. Cys296 is subject to Cysteine methyl ester. Cys296 is lipidated: S-farnesyl cysteine. The propeptide at Leu297–Met299 is removed in mature form.

This sequence belongs to the peroxin-19 family. As to quaternary structure, interacts with a broad range of peroxisomal membrane proteins, including PEX3, PEX10, PEX11A, PEX11B, PEX12, PEX13, PEX14 and PEX16, PXMP2/PMP22, PXMP4/PMP24, SLC25A17/PMP34, ABCD1/ALDP, ABCD2/ALDRP, and ABCD3/PMP70. Also interacts with the tumor suppressor CDKN2A/p19ARF.

Its subcellular location is the cytoplasm. It localises to the peroxisome membrane. Functionally, necessary for early peroxisomal biogenesis. Acts both as a cytosolic chaperone and as an import receptor for peroxisomal membrane proteins (PMPs). Binds and stabilizes newly synthesized PMPs in the cytoplasm by interacting with their hydrophobic membrane-spanning domains, and targets them to the peroxisome membrane by binding to the integral membrane protein PEX3. Excludes CDKN2A from the nucleus and prevents its interaction with MDM2, which results in active degradation of TP53. The chain is Peroxisomal biogenesis factor 19 (Pex19) from Rattus norvegicus (Rat).